Consider the following 223-residue polypeptide: NAD(P)H-hydrate epimerase (223 aa).

The region spanning 9–209 (MQKIDTYTVN…DIGLLTPPDF (201 aa)) is the YjeF N-terminal domain. Residue 57–61 (NNGAD) participates in (6S)-NADPHX binding. K(+) is bound by residues Asn-58 and Asp-119. (6S)-NADPHX is bound by residues 123-129 (GTGLNNL) and Asp-152. Position 155 (Thr-155) interacts with K(+).

Belongs to the NnrE/AIBP family. The cofactor is K(+).

The catalysed reaction is (6R)-NADHX = (6S)-NADHX. It catalyses the reaction (6R)-NADPHX = (6S)-NADPHX. Functionally, catalyzes the epimerization of the S- and R-forms of NAD(P)HX, a damaged form of NAD(P)H that is a result of enzymatic or heat-dependent hydration. This is a prerequisite for the S-specific NAD(P)H-hydrate dehydratase to allow the repair of both epimers of NAD(P)HX. This is NAD(P)H-hydrate epimerase from Leuconostoc gelidum subsp. gasicomitatum (strain DSM 15947 / CCUG 46042 / CECT 5767 / JCM 12535 / LMG 18811 / NBRC 113245 / TB1-10) (Leuconostoc gasicomitatum).